Consider the following 260-residue polypeptide: uncharacterized protein (260 aa).

The stretch at 1–38 (MNWTREIEQYKQVVASYKLKMKRMEMKISDISEEKRQS) forms a coiled coil.

This is an uncharacterized protein from Caenorhabditis elegans.